An 89-amino-acid polypeptide reads, in one-letter code: uncharacterized protein (89 aa).

Transmembrane regions (helical) follow at residues 5–27 (TLTE…GFTA), 32–51 (LYIG…KRLL), and 63–85 (LFFS…ALVA).

Its subcellular location is the cell membrane. This is an uncharacterized protein from Bacillus subtilis (strain 168).